The sequence spans 425 residues: Putative type I restriction enzyme MjaX specificity subunit (425 aa).

This sequence belongs to the type-I restriction system S methylase family.

In terms of biological role, a putative specificity (S) subunit of a type I restriction enzyme thought to recognize 5'-TAGN(6)TGC-3'; the other subunits are unknown. This Methanocaldococcus jannaschii (strain ATCC 43067 / DSM 2661 / JAL-1 / JCM 10045 / NBRC 100440) (Methanococcus jannaschii) protein is Putative type I restriction enzyme MjaX specificity subunit.